We begin with the raw amino-acid sequence, 173 residues long: Peptide methionine sulfoxide reductase MsrA (173 aa).

Cys-10 is an active-site residue.

It belongs to the MsrA Met sulfoxide reductase family.

The catalysed reaction is L-methionyl-[protein] + [thioredoxin]-disulfide + H2O = L-methionyl-(S)-S-oxide-[protein] + [thioredoxin]-dithiol. It catalyses the reaction [thioredoxin]-disulfide + L-methionine + H2O = L-methionine (S)-S-oxide + [thioredoxin]-dithiol. Functionally, has an important function as a repair enzyme for proteins that have been inactivated by oxidation. Catalyzes the reversible oxidation-reduction of methionine sulfoxide in proteins to methionine. This is Peptide methionine sulfoxide reductase MsrA from Nautilia profundicola (strain ATCC BAA-1463 / DSM 18972 / AmH).